The primary structure comprises 141 residues: Aspartate 1-decarboxylase (141 aa).

Ser-25 serves as the catalytic Schiff-base intermediate with substrate; via pyruvic acid. Ser-25 carries the pyruvic acid (Ser) modification. Position 57 (Thr-57) interacts with substrate. Tyr-58 acts as the Proton donor in catalysis. 73 to 75 (GAA) is a binding site for substrate.

Belongs to the PanD family. In terms of assembly, heterooctamer of four alpha and four beta subunits. It depends on pyruvate as a cofactor. Post-translationally, is synthesized initially as an inactive proenzyme, which is activated by self-cleavage at a specific serine bond to produce a beta-subunit with a hydroxyl group at its C-terminus and an alpha-subunit with a pyruvoyl group at its N-terminus.

It is found in the cytoplasm. It catalyses the reaction L-aspartate + H(+) = beta-alanine + CO2. The protein operates within cofactor biosynthesis; (R)-pantothenate biosynthesis; beta-alanine from L-aspartate: step 1/1. Catalyzes the pyruvoyl-dependent decarboxylation of aspartate to produce beta-alanine. The sequence is that of Aspartate 1-decarboxylase from Salinispora arenicola (strain CNS-205).